The primary structure comprises 438 residues: Aspartate aminotransferase, cytoplasmic (438 aa).

L-aspartate contacts are provided by G73, W167, and N220. An N6-(pyridoxal phosphate)lysine modification is found at K284. R412 contacts L-aspartate.

Belongs to the class-I pyridoxal-phosphate-dependent aminotransferase family. Homodimer. The cofactor is pyridoxal 5'-phosphate.

It is found in the cytoplasm. It catalyses the reaction L-aspartate + 2-oxoglutarate = oxaloacetate + L-glutamate. In terms of biological role, plays a key role in amino acid metabolism. The protein is Aspartate aminotransferase, cytoplasmic (aatB) of Dictyostelium discoideum (Social amoeba).